A 530-amino-acid polypeptide reads, in one-letter code: UDP-glucuronosyltransferase 2B31 (530 aa).

The first 24 residues, 1–24 (MSMKWISVLLGLQLSCYFSSGSCG), serve as a signal peptide directing secretion. Residue Lys-136 is modified to N6-succinyllysine. Asn-316 is a glycosylation site (N-linked (GlcNAc...) asparagine). The chain crosses the membrane as a helical span at residues 495–515 (IGFLLACVATAIFVTTQCCLF).

It belongs to the UDP-glycosyltransferase family.

The protein localises to the microsome membrane. Its subcellular location is the endoplasmic reticulum membrane. The enzyme catalyses glucuronate acceptor + UDP-alpha-D-glucuronate = acceptor beta-D-glucuronoside + UDP + H(+). Functionally, UDPGTs are of major importance in the conjugation and subsequent elimination of potentially toxic xenobiotics and endogenous compounds. This isozyme has glucuronidating capacity on phenols, opioids, and carboxylic acid-containing drugs. This is UDP-glucuronosyltransferase 2B31 (UGT2B31) from Canis lupus familiaris (Dog).